The chain runs to 252 residues: tRNA pseudouridine synthase A (252 aa).

The Nucleophile role is filled by D52. Y111 serves as a coordination point for substrate.

This sequence belongs to the tRNA pseudouridine synthase TruA family. Homodimer.

The catalysed reaction is uridine(38/39/40) in tRNA = pseudouridine(38/39/40) in tRNA. In terms of biological role, formation of pseudouridine at positions 38, 39 and 40 in the anticodon stem and loop of transfer RNAs. The chain is tRNA pseudouridine synthase A from Parabacteroides distasonis (strain ATCC 8503 / DSM 20701 / CIP 104284 / JCM 5825 / NCTC 11152).